The chain runs to 95 residues: Bacterial microcompartment shell protein EutM (95 aa).

The 85-residue stretch at 6-90 folds into the BMC domain; it reads ALGMIETKGL…PHFEVDAILP (85 aa).

Belongs to the bacterial microcompartments protein family. Homohexamer; has a positively charged pore 9 Angstroms in diameter. The hexamers pack into a two-dimensional array. May interact with EutQ.

Its subcellular location is the bacterial microcompartment. Its pathway is amine and polyamine degradation; ethanolamine degradation. In terms of biological role, a component of the bacterial microcompartment (BMC) shell dedicated to ethanolamine degradation. Each homohexamer has a central pore with an opening of up to 9.0 Angstroms. Expression of the eut operon may allow this bacteria to use ethanolamine as a carbon, nitrogen and energy source. The pore probably allows metabolite passage into and out of the BMC. The protein is Bacterial microcompartment shell protein EutM of Clostridioides difficile (strain 630) (Peptoclostridium difficile).